Here is a 249-residue protein sequence, read N- to C-terminus: Putative TrmH family tRNA/rRNA methyltransferase (249 aa).

G196, I216, and L225 together coordinate S-adenosyl-L-methionine.

Belongs to the class IV-like SAM-binding methyltransferase superfamily. RNA methyltransferase TrmH family.

In Staphylococcus saprophyticus subsp. saprophyticus (strain ATCC 15305 / DSM 20229 / NCIMB 8711 / NCTC 7292 / S-41), this protein is Putative TrmH family tRNA/rRNA methyltransferase.